A 207-amino-acid chain; its full sequence is NADH-quinone oxidoreductase subunit C (207 aa).

This sequence belongs to the complex I 30 kDa subunit family. NDH-1 is composed of 14 different subunits. Subunits NuoB, C, D, E, F, and G constitute the peripheral sector of the complex.

It localises to the cell inner membrane. It catalyses the reaction a quinone + NADH + 5 H(+)(in) = a quinol + NAD(+) + 4 H(+)(out). Its function is as follows. NDH-1 shuttles electrons from NADH, via FMN and iron-sulfur (Fe-S) centers, to quinones in the respiratory chain. The immediate electron acceptor for the enzyme in this species is believed to be ubiquinone. Couples the redox reaction to proton translocation (for every two electrons transferred, four hydrogen ions are translocated across the cytoplasmic membrane), and thus conserves the redox energy in a proton gradient. In Rickettsia felis (strain ATCC VR-1525 / URRWXCal2) (Rickettsia azadi), this protein is NADH-quinone oxidoreductase subunit C.